A 387-amino-acid chain; its full sequence is MNVSGCPGAGNASQAGGGGGWHPEAVIVPLLFALIFLVGTVGNTLVLAVLLRGGQAVSTTNLFILNLGVADLCFILCCVPFQATIYTLDGWVFGSLLCKAVHFLIFLTMHASSFTLAAVSLDRYLAIRYPLHSRELRTPRNALAAIGLIWGLSLLFSGPYLSYYRQSQLANLTVCHPAWSAPRRRAMDICTFVFSYLLPVLVLGLTYARTLRYLWRAVDPVAAGSGARRAKRKVTRMILIVAALFCLCWMPHHALILCVWFGQFPLTRATYALRILSHLVSYANSCVNPIVYALVSKHFRKGFRTICAGLLGRAPGRASGRVCAAARGTHSGSVLERESSDLLHMSEAAGALRPCPGASQPCILEPCPGPSWQGPKAGDSILTVDVA.

Topologically, residues 1–28 are extracellular; that stretch reads MNVSGCPGAGNASQAGGGGGWHPEAVIV. Asn-2 and Asn-11 each carry an N-linked (GlcNAc...) asparagine glycan. Residues 29-49 traverse the membrane as a helical segment; the sequence is PLLFALIFLVGTVGNTLVLAV. Over 50–60 the chain is Cytoplasmic; sequence LLRGGQAVSTT. The chain crosses the membrane as a helical span at residues 61-81; the sequence is NLFILNLGVADLCFILCCVPF. The Extracellular portion of the chain corresponds to 82-99; that stretch reads QATIYTLDGWVFGSLLCK. A disulfide bond links Cys-98 and Cys-175. A helical transmembrane segment spans residues 100 to 121; it reads AVHFLIFLTMHASSFTLAAVSL. The Cytoplasmic segment spans residues 122-141; that stretch reads DRYLAIRYPLHSRELRTPRN. The chain crosses the membrane as a helical span at residues 142-162; the sequence is ALAAIGLIWGLSLLFSGPYLS. Residues 163–187 are Extracellular-facing; it reads YYRQSQLANLTVCHPAWSAPRRRAM. A helical membrane pass occupies residues 188–208; sequence DICTFVFSYLLPVLVLGLTYA. Residues 209–237 lie on the Cytoplasmic side of the membrane; it reads RTLRYLWRAVDPVAAGSGARRAKRKVTRM. A helical transmembrane segment spans residues 238–258; that stretch reads ILIVAALFCLCWMPHHALILC. Residues 259 to 260 are Extracellular-facing; that stretch reads VW. A helical transmembrane segment spans residues 261 to 281; that stretch reads FGQFPLTRATYALRILSHLVS. At 282 to 387 the chain is on the cytoplasmic side; the sequence is YANSCVNPIV…GDSILTVDVA (106 aa).

The protein belongs to the G-protein coupled receptor 1 family. In terms of tissue distribution, expressed abundantly within the central nervous system in both hypothalamus and hippocampus. In peripheral tissues, the strongest expression was observed in heart, kidney, liver, and small intestine.

The protein localises to the cell membrane. Its function is as follows. Receptor for the hormone galanin and GALP. Receptor for the hormone spexin-1. The activity of this receptor is mediated by G proteins that activate the phospholipase C/protein kinase C pathway (via G(q)) and that inhibit adenylyl cyclase (via G(i)). This Homo sapiens (Human) protein is Galanin receptor type 2 (GALR2).